The sequence spans 385 residues: Probable tRNA sulfurtransferase (385 aa).

One can recognise a THUMP domain in the interval 57–161 (NESIKRLSNV…NKNAYVWSNK (105 aa)). ATP is bound by residues 181–182 (ML), 206–207 (YY), Arg-263, Gly-285, and Gln-294.

This sequence belongs to the ThiI family.

It localises to the cytoplasm. The catalysed reaction is [ThiI sulfur-carrier protein]-S-sulfanyl-L-cysteine + a uridine in tRNA + 2 reduced [2Fe-2S]-[ferredoxin] + ATP + H(+) = [ThiI sulfur-carrier protein]-L-cysteine + a 4-thiouridine in tRNA + 2 oxidized [2Fe-2S]-[ferredoxin] + AMP + diphosphate. It catalyses the reaction [ThiS sulfur-carrier protein]-C-terminal Gly-Gly-AMP + S-sulfanyl-L-cysteinyl-[cysteine desulfurase] + AH2 = [ThiS sulfur-carrier protein]-C-terminal-Gly-aminoethanethioate + L-cysteinyl-[cysteine desulfurase] + A + AMP + 2 H(+). Its pathway is cofactor biosynthesis; thiamine diphosphate biosynthesis. In terms of biological role, catalyzes the ATP-dependent transfer of a sulfur to tRNA to produce 4-thiouridine in position 8 of tRNAs, which functions as a near-UV photosensor. Also catalyzes the transfer of sulfur to the sulfur carrier protein ThiS, forming ThiS-thiocarboxylate. This is a step in the synthesis of thiazole, in the thiamine biosynthesis pathway. The sulfur is donated as persulfide by IscS. The sequence is that of Probable tRNA sulfurtransferase from Clostridium botulinum (strain Alaska E43 / Type E3).